The primary structure comprises 438 residues: Serine--tRNA ligase (438 aa).

Residue 243-245 (TAE) participates in L-serine binding. 274–276 (RSE) is an ATP binding site. Position 297 (Glu297) interacts with L-serine. Residue 361–364 (EISS) coordinates ATP. Ser396 contributes to the L-serine binding site.

The protein belongs to the class-II aminoacyl-tRNA synthetase family. Type-1 seryl-tRNA synthetase subfamily. As to quaternary structure, homodimer. The tRNA molecule binds across the dimer.

The protein localises to the cytoplasm. The enzyme catalyses tRNA(Ser) + L-serine + ATP = L-seryl-tRNA(Ser) + AMP + diphosphate + H(+). The catalysed reaction is tRNA(Sec) + L-serine + ATP = L-seryl-tRNA(Sec) + AMP + diphosphate + H(+). Its pathway is aminoacyl-tRNA biosynthesis; selenocysteinyl-tRNA(Sec) biosynthesis; L-seryl-tRNA(Sec) from L-serine and tRNA(Sec): step 1/1. In terms of biological role, catalyzes the attachment of serine to tRNA(Ser). Is also able to aminoacylate tRNA(Sec) with serine, to form the misacylated tRNA L-seryl-tRNA(Sec), which will be further converted into selenocysteinyl-tRNA(Sec). The chain is Serine--tRNA ligase from Ralstonia pickettii (strain 12J).